The sequence spans 472 residues: 3-isopropylmalate dehydratase large subunit (472 aa).

Positions 347, 407, and 410 each coordinate [4Fe-4S] cluster.

Belongs to the aconitase/IPM isomerase family. LeuC type 1 subfamily. In terms of assembly, heterodimer of LeuC and LeuD. [4Fe-4S] cluster is required as a cofactor.

It catalyses the reaction (2R,3S)-3-isopropylmalate = (2S)-2-isopropylmalate. The protein operates within amino-acid biosynthesis; L-leucine biosynthesis; L-leucine from 3-methyl-2-oxobutanoate: step 2/4. Its function is as follows. Catalyzes the isomerization between 2-isopropylmalate and 3-isopropylmalate, via the formation of 2-isopropylmaleate. The protein is 3-isopropylmalate dehydratase large subunit of Synechococcus sp. (strain WH7803).